We begin with the raw amino-acid sequence, 563 residues long: Arginine--tRNA ligase (563 aa).

Positions proline 121 to histidine 131 match the 'HIGH' region motif.

This sequence belongs to the class-I aminoacyl-tRNA synthetase family. Monomer.

The protein localises to the cytoplasm. The enzyme catalyses tRNA(Arg) + L-arginine + ATP = L-arginyl-tRNA(Arg) + AMP + diphosphate. The sequence is that of Arginine--tRNA ligase from Streptococcus pneumoniae (strain Taiwan19F-14).